The sequence spans 215 residues: Large ribosomal subunit protein bL25 (215 aa).

The segment covering 1-10 (MAKSASNQLR) has biased composition (polar residues). 2 disordered regions span residues 1-25 (MAKS…SRRA) and 187-215 (ELEG…GESE).

This sequence belongs to the bacterial ribosomal protein bL25 family. CTC subfamily. Part of the 50S ribosomal subunit; part of the 5S rRNA/L5/L18/L25 subcomplex. Contacts the 5S rRNA. Binds to the 5S rRNA independently of L5 and L18.

This is one of the proteins that binds to the 5S RNA in the ribosome where it forms part of the central protuberance. The protein is Large ribosomal subunit protein bL25 of Mycobacterium bovis (strain ATCC BAA-935 / AF2122/97).